The primary structure comprises 807 residues: 85/88 kDa calcium-independent phospholipase A2 (807 aa).

A Phosphoserine modification is found at serine 13. ANK repeat units follow at residues 120–147, 151–181, 185–215, 219–248, 251–281, 286–312, 316–345, 349–378, and 382–403; these read WTVT…ANST, EGCT…QMDV, KGET…GLNQ, QGLT…RCNI, PGGF…QIHS, YGAS…DVDS, SGNT…NAGA, HGNT…EVDT, and FGET…KALL. 2 consecutive transmembrane segments (helical) span residues 481–501 and 512–532; these read LLCL…LIAI and LFDW…ILHS. The region spanning 482-666 is the PNPLA domain; sequence LCLDGGGVKG…LANNPTLDAM (185 aa). Positions 486-491 match the GXGXXG motif; the sequence is GGGVKG. Residues 518–522 carry the GXSXG motif; sequence GTSTG. Serine 520 acts as the Nucleophile in catalysis. Catalysis depends on aspartate 653, which acts as the Proton acceptor. A DGA/G motif is present at residues 653–655; it reads DGG. The tract at residues 678-687 is calmodulin-binding (1-9-14 motif); sequence RKGQGNKVKK. The calmodulin-binding (IQ motif) stretch occupies residues 749–760; it reads AWCEMVGIQYFR.

In terms of assembly, homodimer formed by catalytic domains tightly interacting through a large hydrophobic interface. The contact area involves 3 alpha helices, several loops and a part of the beta sheet from each monomer. Both active sites of the dimer are in close proximity adopting an open conformation that provide sufficient space for phospholipid access and favoring cooperativity in deacylation-reacylation reactions. Each monomer has 9 ankyrin repeats stacked side-by-side in an elongated structure oriented outwards from the catalytic core. Expressed in neurons of central and peripheral nervous system. Highly expressed in Purkinje cells in cerebellum and dorsal and ventral horn neurons in the spinal cord. Expressed in testis (at protein level). Expressed in skeletal muscle (at protein level).

Its subcellular location is the cytoplasm. The protein resides in the cell membrane. The protein localises to the mitochondrion. It is found in the cell projection. It localises to the pseudopodium. The enzyme catalyses a 1,2-diacyl-sn-glycero-3-phosphocholine + H2O = a 1-acyl-sn-glycero-3-phosphocholine + a fatty acid + H(+). It catalyses the reaction a 1-O-alkyl-2-acyl-sn-glycero-3-phosphocholine + H2O = a 1-O-alkyl-sn-glycero-3-phosphocholine + a fatty acid + H(+). It carries out the reaction 1,2-dihexadecanoyl-sn-glycero-3-phosphocholine + H2O = 1-hexadecanoyl-sn-glycero-3-phosphocholine + hexadecanoate + H(+). The catalysed reaction is 1-hexadecanoyl-2-(9Z-octadecenoyl)-sn-glycero-3-phosphocholine + H2O = 1-hexadecanoyl-sn-glycero-3-phosphocholine + (9Z)-octadecenoate + H(+). The enzyme catalyses 1-hexadecanoyl-2-(9Z,12Z-octadecadienoyl)-sn-glycero-3-phosphocholine + H2O = (9Z,12Z)-octadecadienoate + 1-hexadecanoyl-sn-glycero-3-phosphocholine + H(+). It catalyses the reaction 1-hexadecanoyl-2-(5Z,8Z,11Z,14Z-eicosatetraenoyl)-sn-glycero-3-phosphocholine + H2O = 1-hexadecanoyl-sn-glycero-3-phosphocholine + (5Z,8Z,11Z,14Z)-eicosatetraenoate + H(+). It carries out the reaction 1-octadecanoyl-2-(5Z,8Z,11Z,14Z-eicosatetraenoyl)-sn-glycero-3-phosphocholine + H2O = 1-octadecanoyl-sn-glycero-3-phosphocholine + (5Z,8Z,11Z,14Z)-eicosatetraenoate + H(+). The catalysed reaction is 1-hexadecanoyl-2-(5Z,8Z,11Z,14Z-eicosatetraenoyl)-sn-glycero-3-phosphoethanolamine + H2O = 1-hexadecanoyl-sn-glycero-3-phosphoethanolamine + (5Z,8Z,11Z,14Z)-eicosatetraenoate + H(+). The enzyme catalyses 1,2-dihexadecanoyl-sn-glycero-3-phosphate + H2O = 1-hexadecanoyl-sn-glycero-3-phosphate + hexadecanoate + H(+). It catalyses the reaction a 1-acyl-sn-glycero-3-phosphocholine + H2O = sn-glycerol 3-phosphocholine + a fatty acid + H(+). It carries out the reaction 1-hexadecanoyl-sn-glycero-3-phosphocholine + H2O = sn-glycerol 3-phosphocholine + hexadecanoate + H(+). The catalysed reaction is 1-(5Z,8Z,11Z,14Z-eicosatetraenoyl)-sn-glycero-3-phosphocholine + H2O = sn-glycerol 3-phosphocholine + (5Z,8Z,11Z,14Z)-eicosatetraenoate + H(+). The enzyme catalyses 2-(5Z,8Z,11Z,14Z)-eicosatetraenoyl-sn-glycero-3-phosphocholine + H2O = sn-glycerol 3-phosphocholine + (5Z,8Z,11Z,14Z)-eicosatetraenoate + H(+). It catalyses the reaction 1-O-hexadecyl-2-(5Z,8Z,11Z,14Z)-eicosatetraenoyl-sn-glycero-3-phosphocholine + H2O = 1-O-hexadecyl-sn-glycero-3-phosphocholine + (5Z,8Z,11Z,14Z)-eicosatetraenoate + H(+). It carries out the reaction 1-O-hexadecyl-2-acetyl-sn-glycero-3-phosphocholine + H2O = 1-O-hexadecyl-sn-glycero-3-phosphocholine + acetate + H(+). The catalysed reaction is hexadecanoyl-CoA + H2O = hexadecanoate + CoA + H(+). The enzyme catalyses 1',3'-bis[1,2-di-(9Z-octadecenoyl)-sn-glycero-3-phospho]-glycerol + H2O = 1'-[1,2-di-(9Z-octadecenoyl)-sn-glycero-3-phospho]-3'-[1-(9Z-octadecenoyl)-sn-glycero-3-phospho]-glycerol + (9Z)-octadecenoate + H(+). It catalyses the reaction 1'-[1,2-di-(9Z-octadecenoyl)-sn-glycero-3-phospho]-3'-[1-(9Z-octadecenoyl)-sn-glycero-3-phospho]-glycerol + H2O = 1',3'-bis-[1-(9Z-octadecenoyl)-sn-glycero-3-phospho]-glycerol + (9Z)-octadecenoate + H(+). It carries out the reaction 1',3'-bis-[1,2-di-(9Z,12Z-octadecadienoyl)-sn-glycero-3-phospho]-glycerol + H2O = 1'-[1,2-di-(9Z,12Z-octadecadienoyl)-sn-glycero-3-phospho]-3'-[1-(9Z,12Z-octadecadienoyl)-sn-glycero-3-phospho]-glycerol + (9Z,12Z)-octadecadienoate + H(+). The catalysed reaction is 1-octadecanoyl-2-(15-hydroxy-(5Z,8Z,11Z,13E)-eicosatetraenoyl)-sn-glycero-3-phosphoethanolamine + H2O = 1-octadecanoyl-sn-glycero-3-phosphoethanolamine + 15-hydroxy-(5Z,8Z,11Z,13E)-eicosatetraenoate + H(+). Its activity is regulated as follows. Inhibited by calcium-activated calmodulin. Activated by ATP. Inhibited by bromoenol lactone (BEL). Functionally, calcium-independent phospholipase involved in phospholipid remodeling with implications in cellular membrane homeostasis, mitochondrial integrity and signal transduction. Hydrolyzes the ester bond of the fatty acyl group attached at sn-1 or sn-2 position of phospholipids (phospholipase A1 and A2 activity respectively), producing lysophospholipids that are used in deacylation-reacylation cycles. Hydrolyzes both saturated and unsaturated long fatty acyl chains in various glycerophospholipid classes such as phosphatidylcholines, phosphatidylethanolamines and phosphatidates, with a preference for hydrolysis at sn-2 position. Can further hydrolyze lysophospholipids carrying saturated fatty acyl chains (lysophospholipase activity). Upon oxidative stress, contributes to remodeling of mitochondrial phospholipids in pancreatic beta cells, in a repair mechanism to reduce oxidized lipid content. Preferentially hydrolyzes oxidized polyunsaturated fatty acyl chains from cardiolipins, yielding monolysocardiolipins that can be reacylated with unoxidized fatty acyls to regenerate native cardiolipin species. Hydrolyzes oxidized glycerophosphoethanolamines present in pancreatic islets, releasing oxidized polyunsaturated fatty acids such as hydroxyeicosatetraenoates (HETEs). Has thioesterase activity toward fatty-acyl CoA releasing CoA-SH known to facilitate fatty acid transport and beta-oxidation in mitochondria particularly in skeletal muscle. Plays a role in regulation of membrane dynamics and homeostasis. Selectively hydrolyzes sn-2 arachidonoyl group in plasmalogen phospholipids, structural components of lipid rafts and myelin. Regulates F-actin polymerization at the pseudopods, which is required for both speed and directionality of MCP1/CCL2-induced monocyte chemotaxis. Targets membrane phospholipids to produce potent lipid signaling messengers. Generates lysophosphatidate (LPA, 1-acyl-glycerol-3-phosphate), which acts via G-protein receptors in various cell types. Has phospholipase A2 activity toward platelet-activating factor (PAF, 1-O-alkyl-2-acetyl-sn-glycero-3-phosphocholine), likely playing a role in inactivation of this potent pro-inflammatory signaling lipid. In response to glucose, amplifies calcium influx in pancreatic beta cells to promote INS secretion. The protein is 85/88 kDa calcium-independent phospholipase A2 (Pla2g6) of Mus musculus (Mouse).